Here is a 457-residue protein sequence, read N- to C-terminus: MSFVPGQENAGSRSSSGNRAGNGILKKTTWADQTERGSNNQNRGRRNQPKQTATTQPNSGSVVPHYSWFSGITQFQKGKEFKFAEGQGVPIANGIPATEQKGYWFRHNRRSFKSPDGQQKQLLPRWYFYYLGTGPYAGAEYGDDVEGVCWVANKQADTRTSADIAERDPSSHEAIPTRFAPGTFLPQGYYVEGSGRSAPASRSGSRSQSRGPNNRARSSSNQRQPASIVKPDMAEEIAALVLAKLGKDAGQPKQVTKQSAKEVRQKILNKPRQKRTPNKQCPVQQCFGKRGPNQNFGGPEMLKLGTSDPQFPILAELAPTAGAFFFGSKLELVKKNSVGVDEPTKDVYELQYSGAVRFDSTLPGFETIMKVLRENLNAYQNQDGGADVVSPKPQRKRGQRQVAQKKNDEVDNVSVAKPKSAVQRNVNRELTPEDRSLLAQILDDGVVPDGLEDDSNV.

The segment at 1–62 (MSFVPGQENA…ATTQPNSGSV (62 aa)) is disordered. The segment covering 9–23 (NAGSRSSSGNRAGNG) has biased composition (low complexity). The span at 49 to 61 (PKQTATTQPNSGS) shows a compositional bias: polar residues. Residues 56–197 (QPNSGSVVPH…GYYVEGSGRS (142 aa)) are RNA-binding. One can recognise a CoV N NTD domain in the interval 64-193 (PHYSWFSGIT…FLPQGYYVEG (130 aa)). Positions 109, 125, and 167 each coordinate RNA. 4 disordered regions span residues 158 to 178 (TRTSADIAERDPSSHEAIPTR), 190 to 228 (YVEGSGRSAPASRSGSRSQSRGPNNRARSSSNQRQPASI), 249 to 290 (AGQP…FGKR), and 382 to 429 (QDGG…VNRE). Ser-170 bears the Phosphoserine; by host mark. At Thr-177 the chain carries Phosphothreonine; by host. The segment covering 193–212 (GSGRSAPASRSGSRSQSRGP) has biased composition (low complexity). Ser-194 is subject to Phosphoserine; by host. Over residues 215–225 (RARSSSNQRQP) the composition is skewed to polar residues. The region spanning 260-383 (AKEVRQKILN…ENLNAYQNQD (124 aa)) is the CoV N CTD domain. Residues 267 to 277 (ILNKPRQKRTP) are compositionally biased toward basic residues. A dimerization region spans residues 267–384 (ILNKPRQKRT…NLNAYQNQDG (118 aa)). The residue at position 390 (Ser-390) is a Phosphoserine; by host. The residue at position 431 (Thr-431) is a Phosphothreonine; by host.

This sequence belongs to the betacoronavirus nucleocapsid protein family. As to quaternary structure, homooligomer. Both monomeric and oligomeric forms interact with RNA. Interacts with protein M. Interacts with NSP3; this interaction serves to tether the genome to the newly translated replicase-transcriptase complex at a very early stage of infection. In terms of processing, ADP-ribosylated. The ADP-ribosylation is retained in the virion during infection. Post-translationally, phosphorylated on serine and threonine residues.

Its subcellular location is the virion. The protein resides in the host endoplasmic reticulum-Golgi intermediate compartment. It is found in the host Golgi apparatus. Its function is as follows. Packages the positive strand viral genome RNA into a helical ribonucleocapsid (RNP) and plays a fundamental role during virion assembly through its interactions with the viral genome and membrane protein M. Plays an important role in enhancing the efficiency of subgenomic viral RNA transcription as well as viral replication. The chain is Nucleoprotein from Puffinus puffinus (Manx shearwater).